We begin with the raw amino-acid sequence, 293 residues long: uncharacterized protein (293 aa).

Residue E47 is part of the active site.

Belongs to the PhzF family.

This is an uncharacterized protein from Bacillus subtilis (strain 168).